The following is a 464-amino-acid chain: Glycine receptor subunit alpha-3 (464 aa).

A signal peptide spans 1-33 (MAHVRHFRTLLSGFYFWEAALLLSLVATKETNS). The Extracellular segment spans residues 34 to 255 (ARSRSAPMSP…RFHLERQMGY (222 aa)). An N-linked (GlcNAc...) asparagine glycan is attached at N71. C171 and C185 are oxidised to a cystine. Zn(2+) is bound by residues E225 and D227. C231 and C242 form a disulfide bridge. Position 235–240 (235–240 (YNTGKF)) interacts with strychnine. H248 serves as a coordination point for Zn(2+). The chain crosses the membrane as a helical span at residues 256–277 (YLIQMYIPSLLIVILSWVSFWI). Topologically, residues 278–282 (NMDAA) are cytoplasmic. Residues 283-303 (PARVALGITTVLTMTTQSSGS) form a helical membrane-spanning segment. Over 304–314 (RASLPKVSYVK) the chain is Extracellular. A helical membrane pass occupies residues 315 to 335 (AIDIWMAVCLLFVFSALLEYA). At 336–430 (AVNFVSRQHK…FIDRAKKIDT (95 aa)) the chain is on the cytoplasmic side. S370 is modified (phosphoserine). S379 is subject to Phosphoserine; by PKA. The chain crosses the membrane as a helical span at residues 431–451 (ISRACFPLAFLIFNIFYWVIY). Residues 452 to 464 (KILRHEDIHHQQD) lie on the Extracellular side of the membrane.

It belongs to the ligand-gated ion channel (TC 1.A.9) family. Glycine receptor (TC 1.A.9.3) subfamily. GLRA3 sub-subfamily. As to quaternary structure, homopentamer (in vitro). Heteropentamer composed of GLRA3 and GLRB. Both homopentamers and heteropentamers form functional ion channels, but their characteristics are subtly different. In terms of processing, phosphorylated by PKA; this causes down-regulation of channel activity.

The protein localises to the postsynaptic cell membrane. Its subcellular location is the perikaryon. It is found in the cell projection. It localises to the dendrite. The protein resides in the synapse. The protein localises to the cell membrane. The enzyme catalyses chloride(in) = chloride(out). With respect to regulation, low levels of Zn(2+) ions (1 uM) increase glycine sensitivity and decrease the glycine concentration required for half-maximal channel activity. Channel activity is strongly enhanced by ethanol. Inhibited by picrotoxin. Inhibited by prostaglandin E2, probably via PKA-mediated phosphorylation at Ser-379. In terms of biological role, glycine receptors are ligand-gated chloride channels. Channel opening is triggered by extracellular glycine. Channel characteristics depend on the subunit composition; heteropentameric channels display faster channel closure. Plays an important role in the down-regulation of neuronal excitability. Contributes to the generation of inhibitory postsynaptic currents. Contributes to increased pain perception in response to increased prostaglandin E2 levels. Plays a role in cellular responses to ethanol. In Rattus norvegicus (Rat), this protein is Glycine receptor subunit alpha-3 (Glra3).